Consider the following 63-residue polypeptide: Large ribosomal subunit protein uL29 (63 aa).

It belongs to the universal ribosomal protein uL29 family.

This chain is Large ribosomal subunit protein uL29, found in Pseudoalteromonas translucida (strain TAC 125).